The following is a 44-amino-acid chain: Iota-conotoxin-like R11.11 (44 aa).

4 disulfides stabilise this stretch: cysteine 5/cysteine 19, cysteine 12/cysteine 22, cysteine 18/cysteine 27, and cysteine 21/cysteine 36. Position 44 (arginine 44) is a propeptide, removed by a carboxypeptidase.

This sequence belongs to the conotoxin I1 superfamily. In terms of tissue distribution, expressed by the venom duct.

The protein localises to the secreted. Its function is as follows. Iota-conotoxins bind to voltage-gated sodium channels (Nav) and act as agonists by shifting the voltage-dependence of activation to more hyperpolarized levels. Produces general excitatory symptoms. This chain is Iota-conotoxin-like R11.11, found in Conus radiatus (Rayed cone).